The chain runs to 44 residues: Photosystem I reaction center subunit IX (44 aa).

A helical membrane pass occupies residues 7–27 (YLSVAPVVSTLWFAALAGLLI).

It belongs to the PsaJ family.

The protein resides in the plastid. It is found in the chloroplast thylakoid membrane. Its function is as follows. May help in the organization of the PsaE and PsaF subunits. The chain is Photosystem I reaction center subunit IX from Lotus japonicus (Lotus corniculatus var. japonicus).